The primary structure comprises 718 residues: MSNESKCPFSGHNSKPQVTVGGGTANLHWWPNQLRVDLLNQHSERSNPLGKDFNYRQEFKKLDYYALKADIKNVLTDSQDWWPADWGNYTGLFIRLAWHAAGTYRMGDGRGGAGRGQQRFAPLNSWPDNASLDKARRLLWPVKQKYGQKISWADLFILAGNIALESSGFRTFGFGAGREDVWEPDNDVNWGDEKEWLAHRNSEALAGSNLAATEMGLIYVNPEGPQASGDPRSAAPFIRATFGNMAMDDEEIVALIAGGHTLGKTHGAASADHVQADPEGAPIEQMGFGWANSYGTGVGKDAITSGLEVIWSQTPTQWSNYFFENLFKYEWVQERSPAGAIQWVAADAEAIIPDPFDPSIKRKPTMLTTDLTLRFDPEFEKISRRFLNDPQAFANAFARAWFKLTHRDMGPKARYLGPEVPAEDLIWQDPLPAASATPSSASIADAKAKIVALGLSTGELVSLAWASASTFRGGDKRGGANGARIALSPQREWEVNKKAVETLTKIEELKASTQLSLADLIVLAGNVGVEQAAQAAGFNITVPFAPGRVDALQSQTDVESFQLLLGLADGFRNWKKQGVNTPAEVLLIDKAQQLTLTAPELTALIGGLRVLGTNWDGSQHGVFTQQVGVLSTDFFTNLLDMSNVWAPVDSTSEVFEGKDRKSGTVKFTATRNDLVFGSNSILRALAEVYAQADGKEKFVQDFVAAWTKVMNLDRFDLA.

A cross-link (tryptophyl-tyrosyl-methioninium (Trp-Tyr) (with M-245)) is located at residues 98-219 (WHAAGTYRMG…LAATEMGLIY (122 aa)). The active-site Proton acceptor is H99. The tryptophyl-tyrosyl-methioninium (Tyr-Met) (with W-98) cross-link spans 219–245 (YVNPEGPQASGDPRSAAPFIRATFGNM). H260 contributes to the heme b binding site.

This sequence belongs to the peroxidase family. Peroxidase/catalase subfamily. As to quaternary structure, homodimer or homotetramer. The cofactor is heme b. Post-translationally, formation of the three residue Trp-Tyr-Met cross-link is important for the catalase, but not the peroxidase activity of the enzyme.

The catalysed reaction is H2O2 + AH2 = A + 2 H2O. It catalyses the reaction 2 H2O2 = O2 + 2 H2O. In terms of biological role, bifunctional enzyme with both catalase and broad-spectrum peroxidase activity. The chain is Catalase-peroxidase from Acinetobacter baumannii (strain ACICU).